Here is a 254-residue protein sequence, read N- to C-terminus: Nickel import ATP-binding protein NikO (254 aa).

An ABC transporter domain is found at 5–246; that stretch reads FELQGVQFAY…TALLRRARLL (242 aa). An ATP-binding site is contributed by 37-44; that stretch reads GANGSGKS.

The protein belongs to the ABC transporter superfamily. In terms of assembly, forms an energy-coupling factor (ECF) transporter complex composed of an ATP-binding protein (A component, NikO), a transmembrane protein (T component, NikQ) and a fused possible substrate-capture protein (S component, NikMN) of unknown stoichimetry.

Its subcellular location is the cell inner membrane. The catalysed reaction is Ni(2+)(out) + ATP + H2O = Ni(2+)(in) + ADP + phosphate + H(+). In terms of biological role, part of the energy-coupling factor (ECF) transporter complex NikMNQO involved in nickel import. The complex confers nickel uptake upon expression in E.coli. Shows very low activity with cobalt. Presumably responsible for energy coupling to the transport system. This Rhodobacter capsulatus (strain ATCC BAA-309 / NBRC 16581 / SB1003) protein is Nickel import ATP-binding protein NikO.